The sequence spans 247 residues: ATP synthase subunit a, chloroplastic (247 aa).

5 consecutive transmembrane segments (helical) span residues 38-58 (QVLITSWVVITILLGSVIIAV), 95-115 (VPFIGTMFLFIFVSNWSGALL), 134-154 (INTTVALALLTSAAYFYAGLS), 199-219 (LVVVVLVSLVPLVVPIPVMFL), and 220-240 (GLFTSGIQALIFATLAAAYIG).

The protein belongs to the ATPase A chain family. As to quaternary structure, F-type ATPases have 2 components, CF(1) - the catalytic core - and CF(0) - the membrane proton channel. CF(1) has five subunits: alpha(3), beta(3), gamma(1), delta(1), epsilon(1). CF(0) has four main subunits: a, b, b' and c.

It localises to the plastid. The protein localises to the chloroplast thylakoid membrane. Key component of the proton channel; it plays a direct role in the translocation of protons across the membrane. The polypeptide is ATP synthase subunit a, chloroplastic (Oryza nivara (Indian wild rice)).